Consider the following 318-residue polypeptide: Pseudouridine-5'-phosphate glycosidase 1 (318 aa).

Residue E29 is the Proton donor of the active site. Substrate contacts are provided by K90 and V110. D142 is a binding site for Mn(2+). Position 144–146 (144–146) interacts with substrate; that stretch reads SAD. The Nucleophile role is filled by K163.

The protein belongs to the pseudouridine-5'-phosphate glycosidase family. Homotrimer. Mn(2+) is required as a cofactor.

The catalysed reaction is D-ribose 5-phosphate + uracil = psi-UMP + H2O. In terms of biological role, catalyzes the reversible cleavage of pseudouridine 5'-phosphate (PsiMP) to ribose 5-phosphate and uracil. Functions biologically in the cleavage direction, as part of a pseudouridine degradation pathway. This is Pseudouridine-5'-phosphate glycosidase 1 from Photorhabdus laumondii subsp. laumondii (strain DSM 15139 / CIP 105565 / TT01) (Photorhabdus luminescens subsp. laumondii).